Reading from the N-terminus, the 96-residue chain is Antigen H4 (96 aa).

The segment at glutamate 1–glutamate 20 is disordered. N-linked (GlcNAc...) asparagine glycosylation occurs at asparagine 34.

The chain is Antigen H4 (H4) from Toxoplasma gondii.